We begin with the raw amino-acid sequence, 305 residues long: Probable lipid kinase YegS-like (305 aa).

Positions His-2–Tyr-134 constitute a DAGKc domain. ATP-binding positions include Thr-40, Gly-66 to Glu-72, and Thr-95. Residues Leu-215, Asp-218, and Leu-220 each contribute to the Mg(2+) site. Residue Glu-271 is the Proton acceptor of the active site.

The protein belongs to the diacylglycerol/lipid kinase family. YegS lipid kinase subfamily. Mg(2+) serves as cofactor. Requires Ca(2+) as cofactor.

It localises to the cytoplasm. In terms of biological role, probably phosphorylates lipids; the in vivo substrate is unknown. This Serratia proteamaculans (strain 568) protein is Probable lipid kinase YegS-like.